Reading from the N-terminus, the 289-residue chain is ATP synthase gamma chain (289 aa).

It belongs to the ATPase gamma chain family. As to quaternary structure, F-type ATPases have 2 components, CF(1) - the catalytic core - and CF(0) - the membrane proton channel. CF(1) has five subunits: alpha(3), beta(3), gamma(1), delta(1), epsilon(1). CF(0) has three main subunits: a, b and c.

The protein localises to the cell inner membrane. Functionally, produces ATP from ADP in the presence of a proton gradient across the membrane. The gamma chain is believed to be important in regulating ATPase activity and the flow of protons through the CF(0) complex. This is ATP synthase gamma chain from Cereibacter sphaeroides (strain ATCC 17023 / DSM 158 / JCM 6121 / CCUG 31486 / LMG 2827 / NBRC 12203 / NCIMB 8253 / ATH 2.4.1.) (Rhodobacter sphaeroides).